The primary structure comprises 143 residues: Large ribosomal subunit protein uL11 (143 aa).

This sequence belongs to the universal ribosomal protein uL11 family. In terms of assembly, part of the ribosomal stalk of the 50S ribosomal subunit. Interacts with L10 and the large rRNA to form the base of the stalk. L10 forms an elongated spine to which L12 dimers bind in a sequential fashion forming a multimeric L10(L12)X complex. One or more lysine residues are methylated.

Its function is as follows. Forms part of the ribosomal stalk which helps the ribosome interact with GTP-bound translation factors. The chain is Large ribosomal subunit protein uL11 from Bordetella parapertussis (strain 12822 / ATCC BAA-587 / NCTC 13253).